Reading from the N-terminus, the 69-residue chain is Conotoxin Cal12.1p5 (69 aa).

Residues 1–23 (DLITNSYTRGKPRHVTSWRNLKT) constitute a propeptide that is removed on maturation.

Post-translationally, contains 4 disulfide bonds. As to expression, expressed by the venom duct.

It localises to the secreted. In Californiconus californicus (California cone), this protein is Conotoxin Cal12.1p5.